We begin with the raw amino-acid sequence, 400 residues long: Probable peptidoglycan glycosyltransferase FtsW (400 aa).

Helical transmembrane passes span 30–50, 65–84, 92–112, 123–143, 157–177, 179–199, 201–221, 247–267, 280–300, 321–341, and 356–376; these read LSVL…SIGI, QAAY…RIRL, GLLL…GVGV, LGLF…LYLA, FAGF…LLME, DFGA…LAGA, LWQF…LAIT, TQSL…GASV, FLFA…VVLL, LFGA…AFIN, and LPLM…VGLL.

Belongs to the SEDS family. FtsW subfamily.

The protein localises to the cell inner membrane. It catalyses the reaction [GlcNAc-(1-&gt;4)-Mur2Ac(oyl-L-Ala-gamma-D-Glu-L-Lys-D-Ala-D-Ala)](n)-di-trans,octa-cis-undecaprenyl diphosphate + beta-D-GlcNAc-(1-&gt;4)-Mur2Ac(oyl-L-Ala-gamma-D-Glu-L-Lys-D-Ala-D-Ala)-di-trans,octa-cis-undecaprenyl diphosphate = [GlcNAc-(1-&gt;4)-Mur2Ac(oyl-L-Ala-gamma-D-Glu-L-Lys-D-Ala-D-Ala)](n+1)-di-trans,octa-cis-undecaprenyl diphosphate + di-trans,octa-cis-undecaprenyl diphosphate + H(+). The protein operates within cell wall biogenesis; peptidoglycan biosynthesis. Functionally, peptidoglycan polymerase that is essential for cell division. This is Probable peptidoglycan glycosyltransferase FtsW from Thioalkalivibrio sulfidiphilus (strain HL-EbGR7).